Here is a 359-residue protein sequence, read N- to C-terminus: 4-hydroxy-3-methylbut-2-en-1-yl diphosphate synthase (flavodoxin) (359 aa).

4 residues coordinate [4Fe-4S] cluster: cysteine 265, cysteine 268, cysteine 300, and glutamate 307.

The protein belongs to the IspG family. [4Fe-4S] cluster serves as cofactor.

It catalyses the reaction (2E)-4-hydroxy-3-methylbut-2-enyl diphosphate + oxidized [flavodoxin] + H2O + 2 H(+) = 2-C-methyl-D-erythritol 2,4-cyclic diphosphate + reduced [flavodoxin]. It functions in the pathway isoprenoid biosynthesis; isopentenyl diphosphate biosynthesis via DXP pathway; isopentenyl diphosphate from 1-deoxy-D-xylulose 5-phosphate: step 5/6. Functionally, converts 2C-methyl-D-erythritol 2,4-cyclodiphosphate (ME-2,4cPP) into 1-hydroxy-2-methyl-2-(E)-butenyl 4-diphosphate. This chain is 4-hydroxy-3-methylbut-2-en-1-yl diphosphate synthase (flavodoxin), found in Lawsonia intracellularis (strain PHE/MN1-00).